A 342-amino-acid chain; its full sequence is Ribosomal RNA small subunit methyltransferase C (342 aa).

This sequence belongs to the methyltransferase superfamily. RsmC family. As to quaternary structure, monomer.

It is found in the cytoplasm. The enzyme catalyses guanosine(1207) in 16S rRNA + S-adenosyl-L-methionine = N(2)-methylguanosine(1207) in 16S rRNA + S-adenosyl-L-homocysteine + H(+). Specifically methylates the guanine in position 1207 of 16S rRNA in the 30S particle. This Salmonella paratyphi B (strain ATCC BAA-1250 / SPB7) protein is Ribosomal RNA small subunit methyltransferase C.